Consider the following 243-residue polypeptide: Probable transcriptional regulatory protein Patl_0550 (243 aa).

The protein belongs to the TACO1 family.

Its subcellular location is the cytoplasm. This is Probable transcriptional regulatory protein Patl_0550 from Pseudoalteromonas atlantica (strain T6c / ATCC BAA-1087).